We begin with the raw amino-acid sequence, 126 residues long: UPF0047 protein AF_2050 (126 aa).

It belongs to the UPF0047 family.

This chain is UPF0047 protein AF_2050, found in Archaeoglobus fulgidus (strain ATCC 49558 / DSM 4304 / JCM 9628 / NBRC 100126 / VC-16).